A 235-amino-acid polypeptide reads, in one-letter code: UPF0749 protein YlxX (235 aa).

Residues 6-26 traverse the membrane as a helical segment; sequence SFISISVLMVIFGLMISVQFN.

This sequence belongs to the UPF0749 family.

It is found in the cell membrane. This chain is UPF0749 protein YlxX (ylxX), found in Bacillus subtilis (strain 168).